Consider the following 120-residue polypeptide: ATP-dependent Clp protease adapter protein ClpS (120 aa).

This sequence belongs to the ClpS family. As to quaternary structure, binds to the N-terminal domain of the chaperone ClpA.

In terms of biological role, involved in the modulation of the specificity of the ClpAP-mediated ATP-dependent protein degradation. The sequence is that of ATP-dependent Clp protease adapter protein ClpS from Pseudomonas fluorescens (strain ATCC BAA-477 / NRRL B-23932 / Pf-5).